A 319-amino-acid polypeptide reads, in one-letter code: tRNA-cytidine(32) 2-sulfurtransferase (319 aa).

Residues 43–48 (SGGKDS) carry the PP-loop motif motif. Cys-118, Cys-121, and Cys-209 together coordinate [4Fe-4S] cluster.

It belongs to the TtcA family. Homodimer. Mg(2+) serves as cofactor. The cofactor is [4Fe-4S] cluster.

It localises to the cytoplasm. The enzyme catalyses cytidine(32) in tRNA + S-sulfanyl-L-cysteinyl-[cysteine desulfurase] + AH2 + ATP = 2-thiocytidine(32) in tRNA + L-cysteinyl-[cysteine desulfurase] + A + AMP + diphosphate + H(+). It functions in the pathway tRNA modification. Its function is as follows. Catalyzes the ATP-dependent 2-thiolation of cytidine in position 32 of tRNA, to form 2-thiocytidine (s(2)C32). The sulfur atoms are provided by the cysteine/cysteine desulfurase (IscS) system. The sequence is that of tRNA-cytidine(32) 2-sulfurtransferase from Neisseria meningitidis serogroup C / serotype 2a (strain ATCC 700532 / DSM 15464 / FAM18).